The primary structure comprises 213 residues: FMN-dependent NADH:quinone oxidoreductase 3 (213 aa).

FMN contacts are provided by residues Ser-10, 16–18, and 96–99; these read SVS and MYNF.

Belongs to the azoreductase type 1 family. Homodimer. FMN is required as a cofactor.

It catalyses the reaction 2 a quinone + NADH + H(+) = 2 a 1,4-benzosemiquinone + NAD(+). The enzyme catalyses N,N-dimethyl-1,4-phenylenediamine + anthranilate + 2 NAD(+) = 2-(4-dimethylaminophenyl)diazenylbenzoate + 2 NADH + 2 H(+). Functionally, quinone reductase that provides resistance to thiol-specific stress caused by electrophilic quinones. Shows a preference for naphthoquinones such as plumbagin. Its function is as follows. Also exhibits azoreductase activity. Catalyzes the reductive cleavage of the azo bond in aromatic azo compounds to the corresponding amines. Preferred substrates are methyl red, amaranth and p-aminoazobenzene sulfonamide (PAABSA). The chain is FMN-dependent NADH:quinone oxidoreductase 3 from Pseudomonas aeruginosa (strain ATCC 15692 / DSM 22644 / CIP 104116 / JCM 14847 / LMG 12228 / 1C / PRS 101 / PAO1).